A 226-amino-acid polypeptide reads, in one-letter code: Leucyl/phenylalanyl-tRNA--protein transferase (226 aa).

It belongs to the L/F-transferase family.

It localises to the cytoplasm. It carries out the reaction N-terminal L-lysyl-[protein] + L-leucyl-tRNA(Leu) = N-terminal L-leucyl-L-lysyl-[protein] + tRNA(Leu) + H(+). The enzyme catalyses N-terminal L-arginyl-[protein] + L-leucyl-tRNA(Leu) = N-terminal L-leucyl-L-arginyl-[protein] + tRNA(Leu) + H(+). The catalysed reaction is L-phenylalanyl-tRNA(Phe) + an N-terminal L-alpha-aminoacyl-[protein] = an N-terminal L-phenylalanyl-L-alpha-aminoacyl-[protein] + tRNA(Phe). In terms of biological role, functions in the N-end rule pathway of protein degradation where it conjugates Leu, Phe and, less efficiently, Met from aminoacyl-tRNAs to the N-termini of proteins containing an N-terminal arginine or lysine. This Pseudomonas putida (strain W619) protein is Leucyl/phenylalanyl-tRNA--protein transferase.